The primary structure comprises 211 residues: Small ribosomal subunit protein uS3 (211 aa).

The KH type-2 domain occupies 16-85; it reads IDEYFKTKLV…NPQIEVKQVE (70 aa).

Belongs to the universal ribosomal protein uS3 family. As to quaternary structure, part of the 30S ribosomal subunit.

In terms of biological role, binds the lower part of the 30S subunit head. This Methanococcus maripaludis (strain C5 / ATCC BAA-1333) protein is Small ribosomal subunit protein uS3.